A 625-amino-acid chain; its full sequence is Inactive glucose-6-phosphate 1-dehydrogenase 4, chloroplastic (625 aa).

The transit peptide at 1-49 directs the protein to the chloroplast; it reads MSLSSCLLPFSQSATAPSSSVCSCHLAASFSNFPVSSRDYSFSRSGSLV. NADP(+) is bound by residues 160–167 and R194; that span reads GATGELAR. C212 and C220 are disulfide-bonded. NADP(+) is bound at residue K297. D-glucose 6-phosphate-binding positions include K297, 327–331, E365, and D382; that span reads HMLGR. H387 functions as the Proton acceptor in the catalytic mechanism. NADP(+)-binding residues include R471, R480, R513, and R606.

This sequence belongs to the glucose-6-phosphate dehydrogenase family. Forms homodimer. Interacts with G6PD1. In terms of tissue distribution, expressed in leaves, stems and buds.

It localises to the plastid. The protein resides in the chloroplast stroma. Seems to be a catalytically inactive enzyme. The protein is Inactive glucose-6-phosphate 1-dehydrogenase 4, chloroplastic of Arabidopsis thaliana (Mouse-ear cress).